A 295-amino-acid chain; its full sequence is Mitochondrial dicarboxylate transporter (295 aa).

3 Solcar repeats span residues 4 to 88, 96 to 188, and 198 to 286; these read KQVK…LKEH, TNMW…FKNF, and KKNS…LKKY. The next 6 membrane-spanning stretches (helical) occupy residues 8-24, 63-82, 98-122, 163-182, 204-224, and 262-280; these read YPWWYGGAAGIFAVMNT, GLSASLLRQCTYTTARFGMY, MWYLLGASMVSGALGGLAGNFADLI, GWKPNMVRGVLMTASQVVTY, LTSSLLAGFVATTVCSPADVI, and WVPSFTRLAPFTMLIFFAM.

The protein belongs to the mitochondrial carrier (TC 2.A.29) family. In terms of assembly, homodimer.

It is found in the mitochondrion inner membrane. In terms of biological role, mitochondrial dicarboxylic transporter catalyzing the exchange of dicarboxylic acids like malate and succinate for inorganic phosphate. Required for growth on ethanol and acetate. This chain is Mitochondrial dicarboxylate transporter (DIC1), found in Candida glabrata (strain ATCC 2001 / BCRC 20586 / JCM 3761 / NBRC 0622 / NRRL Y-65 / CBS 138) (Yeast).